Here is a 372-residue protein sequence, read N- to C-terminus: NAD(P)H-quinone oxidoreductase subunit 1 (372 aa).

The next 8 membrane-spanning stretches (helical) occupy residues 27 to 47 (IIWLPLPMLLVLVSAVVGVLV), 97 to 117 (ILFTAGPILVLVPVILSWLIV), 128 to 148 (VGIGIFLWIALSSIQPIGLLM), 176 to 196 (LALSVLAIVLMTNSLSTIDIV), 204 to 224 (ILSWNIWRQPVGFIIFWICAL), 266 to 286 (ILSALLVSILYLGGWGFPIPV), 308 to 328 (SIGIIMTVLKAYLLVFVAILL), and 347 to 367 (FLLPISLANLLVTAGLKLAFP).

This sequence belongs to the complex I subunit 1 family. In terms of assembly, NDH-1 is composed of at least 11 different subunits.

It is found in the cellular thylakoid membrane. It catalyses the reaction a plastoquinone + NADH + (n+1) H(+)(in) = a plastoquinol + NAD(+) + n H(+)(out). The enzyme catalyses a plastoquinone + NADPH + (n+1) H(+)(in) = a plastoquinol + NADP(+) + n H(+)(out). Its function is as follows. NDH-1 shuttles electrons from an unknown electron donor, via FMN and iron-sulfur (Fe-S) centers, to quinones in the respiratory and/or the photosynthetic chain. The immediate electron acceptor for the enzyme in this species is believed to be plastoquinone. Couples the redox reaction to proton translocation, and thus conserves the redox energy in a proton gradient. The polypeptide is NAD(P)H-quinone oxidoreductase subunit 1 (Prochlorococcus marinus subsp. pastoris (strain CCMP1986 / NIES-2087 / MED4)).